A 168-amino-acid chain; its full sequence is 6,7-dimethyl-8-ribityllumazine synthase (168 aa).

Residues tryptophan 31, 65–67 (SFE), and 89–91 (CVV) contribute to the 5-amino-6-(D-ribitylamino)uracil site. Residue 94-95 (DT) participates in (2S)-2-hydroxy-3-oxobutyl phosphate binding. Catalysis depends on histidine 97, which acts as the Proton donor. Tyrosine 122 lines the 5-amino-6-(D-ribitylamino)uracil pocket. Arginine 136 contacts (2S)-2-hydroxy-3-oxobutyl phosphate.

Belongs to the DMRL synthase family.

The enzyme catalyses (2S)-2-hydroxy-3-oxobutyl phosphate + 5-amino-6-(D-ribitylamino)uracil = 6,7-dimethyl-8-(1-D-ribityl)lumazine + phosphate + 2 H2O + H(+). It functions in the pathway cofactor biosynthesis; riboflavin biosynthesis; riboflavin from 2-hydroxy-3-oxobutyl phosphate and 5-amino-6-(D-ribitylamino)uracil: step 1/2. In terms of biological role, catalyzes the formation of 6,7-dimethyl-8-ribityllumazine by condensation of 5-amino-6-(D-ribitylamino)uracil with 3,4-dihydroxy-2-butanone 4-phosphate. This is the penultimate step in the biosynthesis of riboflavin. This chain is 6,7-dimethyl-8-ribityllumazine synthase, found in Phocaeicola vulgatus (strain ATCC 8482 / DSM 1447 / JCM 5826 / CCUG 4940 / NBRC 14291 / NCTC 11154) (Bacteroides vulgatus).